A 331-amino-acid polypeptide reads, in one-letter code: Phosphate acyltransferase (331 aa).

Belongs to the PlsX family. As to quaternary structure, homodimer. Probably interacts with PlsY.

It localises to the cytoplasm. It catalyses the reaction a fatty acyl-[ACP] + phosphate = an acyl phosphate + holo-[ACP]. The protein operates within lipid metabolism; phospholipid metabolism. Functionally, catalyzes the reversible formation of acyl-phosphate (acyl-PO(4)) from acyl-[acyl-carrier-protein] (acyl-ACP). This enzyme utilizes acyl-ACP as fatty acyl donor, but not acyl-CoA. The polypeptide is Phosphate acyltransferase (Ureaplasma parvum serovar 3 (strain ATCC 27815 / 27 / NCTC 11736)).